An 804-amino-acid chain; its full sequence is Cell surface sensor MSB2 (804 aa).

Residues 1 to 20 (MHNFSKLAVAFVAAASFASA) form the signal peptide. Topologically, residues 21 to 694 (EPETKAKVER…TNQSATQRGT (674 aa)) are extracellular. N-linked (GlcNAc...) asparagine glycosylation occurs at N45. Low complexity-rich tracts occupy residues 46-58 (TTTP…SSTS) and 69-80 (SSFSSSASSSSA). Disordered stretches follow at residues 46 to 90 (TTTP…RQPT) and 105 to 220 (TDST…ATSN). The interval 46–475 (TTTPASEASS…SVAPTSATSS (430 aa)) is serine/threonine rich region (STR). Composition is skewed to polar residues over residues 81–90 (QELTASRQPT) and 109–126 (PFSQ…SATG). Composition is skewed to low complexity over residues 128 to 143 (VTPI…PSTA) and 150 to 169 (SALT…SVTS). An N-linked (GlcNAc...) asparagine glycan is attached at N157. Over residues 170–188 (PGSTSGPAGTPESSSASDF) the composition is skewed to polar residues. Over residues 189 to 202 (TSAVATSRASTATS) the composition is skewed to low complexity. N-linked (GlcNAc...) asparagine glycosylation is found at N298, N308, N357, and N393. A compositionally biased stretch (polar residues) spans 345–394 (VQTLPPVSTPTANGTVTSPPVDSQTTVLPTTTPGLSSDTIVTSPGVTANS). Positions 345 to 516 (VQTLPPVSTP…APTVLPSDLP (172 aa)) are disordered. Low complexity-rich tracts occupy residues 395–407 (TQVP…TIPT) and 427–476 (NNTV…TSSA). N-linked (GlcNAc...) asparagine glycosylation is found at N427 and N433. The tract at residues 482-641 (WLPTTIIVQA…NGMLAHNLTM (160 aa)) is HKR11-MSB2 homology domain (HMH). Positions 493-508 (LPSTTGSSTNAPSSAP) are enriched in polar residues. 5 N-linked (GlcNAc...) asparagine glycosylation sites follow: N629, N638, N669, N683, and N686. Positions 658–689 (KPAGAGSGTGGNGSNGPNDVFNNDNNSTNQSA) are disordered. The segment covering 660–671 (AGAGSGTGGNGS) has biased composition (gly residues). Low complexity predominate over residues 672–686 (NGPNDVFNNDNNSTN). A helical membrane pass occupies residues 695–715 (VAGIAFGAVSLAAAYGAAMFI). Residues 716–804 (VARRYKKKRQ…VAQENSLGWN (89 aa)) lie on the Cytoplasmic side of the membrane. Disordered regions lie at residues 724 to 748 (RQAH…PALM) and 762 to 804 (GVMG…LGWN). Over residues 731 to 744 (SSVATPSEMRQSGS) the composition is skewed to polar residues. Positions 774–787 (GSNGSGRSAGNSAR) are enriched in low complexity.

It belongs to the HKR1/MSB2 family.

The protein localises to the cell membrane. It localises to the vacuole membrane. Its function is as follows. MSB2 and SHO1 have overlapping functions in recognizing various surface signals for MAPK PMK1 activation and appressorium formation. While MSB2 is critical for sensing surface hydrophobicity and cutin monomers, SHO1 may play a more important role in recognizing rice leaf waxes. This is Cell surface sensor MSB2 from Pyricularia oryzae (strain 70-15 / ATCC MYA-4617 / FGSC 8958) (Rice blast fungus).